A 146-amino-acid polypeptide reads, in one-letter code: Small ribosomal subunit protein uS5 (146 aa).

Residues 8–71 (FEESIVNIGR…DNAFKNLSKV (64 aa)) enclose the S5 DRBM domain.

This sequence belongs to the universal ribosomal protein uS5 family. Part of the 30S ribosomal subunit. Contacts proteins S4 and S8.

With S4 and S12 plays an important role in translational accuracy. Functionally, located at the back of the 30S subunit body where it stabilizes the conformation of the head with respect to the body. The protein is Small ribosomal subunit protein uS5 of Sulfurimonas denitrificans (strain ATCC 33889 / DSM 1251) (Thiomicrospira denitrificans (strain ATCC 33889 / DSM 1251)).